Reading from the N-terminus, the 252-residue chain is Aspartate/glutamate leucyltransferase (252 aa).

The protein belongs to the R-transferase family. Bpt subfamily.

It is found in the cytoplasm. It carries out the reaction N-terminal L-glutamyl-[protein] + L-leucyl-tRNA(Leu) = N-terminal L-leucyl-L-glutamyl-[protein] + tRNA(Leu) + H(+). It catalyses the reaction N-terminal L-aspartyl-[protein] + L-leucyl-tRNA(Leu) = N-terminal L-leucyl-L-aspartyl-[protein] + tRNA(Leu) + H(+). Functions in the N-end rule pathway of protein degradation where it conjugates Leu from its aminoacyl-tRNA to the N-termini of proteins containing an N-terminal aspartate or glutamate. The chain is Aspartate/glutamate leucyltransferase from Afipia carboxidovorans (strain ATCC 49405 / DSM 1227 / KCTC 32145 / OM5) (Oligotropha carboxidovorans).